A 374-amino-acid polypeptide reads, in one-letter code: Queuine tRNA-ribosyltransferase (374 aa).

Catalysis depends on D89, which acts as the Proton acceptor. Residues 89 to 93, D143, Q187, and G214 contribute to the substrate site; that span reads DSGGF. An RNA binding region spans residues 245–251; that stretch reads GVGKPED. The Nucleophile role is filled by D264. Positions 269 to 273 are RNA binding; important for wobble base 34 recognition; sequence TRNAR. Positions 302, 304, 307, and 333 each coordinate Zn(2+).

The protein belongs to the queuine tRNA-ribosyltransferase family. Homodimer. Within each dimer, one monomer is responsible for RNA recognition and catalysis, while the other monomer binds to the replacement base PreQ1. It depends on Zn(2+) as a cofactor.

The enzyme catalyses 7-aminomethyl-7-carbaguanine + guanosine(34) in tRNA = 7-aminomethyl-7-carbaguanosine(34) in tRNA + guanine. It participates in tRNA modification; tRNA-queuosine biosynthesis. Functionally, catalyzes the base-exchange of a guanine (G) residue with the queuine precursor 7-aminomethyl-7-deazaguanine (PreQ1) at position 34 (anticodon wobble position) in tRNAs with GU(N) anticodons (tRNA-Asp, -Asn, -His and -Tyr). Catalysis occurs through a double-displacement mechanism. The nucleophile active site attacks the C1' of nucleotide 34 to detach the guanine base from the RNA, forming a covalent enzyme-RNA intermediate. The proton acceptor active site deprotonates the incoming PreQ1, allowing a nucleophilic attack on the C1' of the ribose to form the product. After dissociation, two additional enzymatic reactions on the tRNA convert PreQ1 to queuine (Q), resulting in the hypermodified nucleoside queuosine (7-(((4,5-cis-dihydroxy-2-cyclopenten-1-yl)amino)methyl)-7-deazaguanosine). In Shewanella frigidimarina (strain NCIMB 400), this protein is Queuine tRNA-ribosyltransferase.